We begin with the raw amino-acid sequence, 303 residues long: Oxygen-dependent coproporphyrinogen-III oxidase (303 aa).

Ser93 contributes to the substrate binding site. Residues His97 and His107 each contribute to the a divalent metal cation site. Residue His107 is the Proton donor of the active site. 109-111 (NIR) is a binding site for substrate. Residues His146 and His176 each coordinate a divalent metal cation. An important for dimerization region spans residues 241–276 (YVEFNLLLDRGTLFGIQSNGRIESILSSMPPLVKWE).

The protein belongs to the aerobic coproporphyrinogen-III oxidase family. Homodimer. A divalent metal cation serves as cofactor.

The protein resides in the cytoplasm. The enzyme catalyses coproporphyrinogen III + O2 + 2 H(+) = protoporphyrinogen IX + 2 CO2 + 2 H2O. Its pathway is porphyrin-containing compound metabolism; protoporphyrin-IX biosynthesis; protoporphyrinogen-IX from coproporphyrinogen-III (O2 route): step 1/1. In terms of biological role, involved in the heme biosynthesis. Catalyzes the aerobic oxidative decarboxylation of propionate groups of rings A and B of coproporphyrinogen-III to yield the vinyl groups in protoporphyrinogen-IX. The protein is Oxygen-dependent coproporphyrinogen-III oxidase of Wigglesworthia glossinidia brevipalpis.